The primary structure comprises 422 residues: Putative nickel insertion protein (422 aa).

It belongs to the LarC family.

The polypeptide is Putative nickel insertion protein (Synechocystis sp. (strain ATCC 27184 / PCC 6803 / Kazusa)).